Consider the following 252-residue polypeptide: Trans-aconitate 2-methyltransferase (252 aa).

It belongs to the methyltransferase superfamily. Tam family. As to quaternary structure, monomer.

Its subcellular location is the cytoplasm. It carries out the reaction trans-aconitate + S-adenosyl-L-methionine = (E)-3-(methoxycarbonyl)pent-2-enedioate + S-adenosyl-L-homocysteine. Functionally, catalyzes the S-adenosylmethionine monomethyl esterification of trans-aconitate at high affinity and of cis-aconitate, isocitrate, and citrate at lower velocities and affinities. The sequence is that of Trans-aconitate 2-methyltransferase (tam) from Escherichia coli O157:H7.